The following is a 254-amino-acid chain: Type III pantothenate kinase (254 aa).

22 to 29 lines the ATP pocket; sequence VLGNTHVR. Substrate-binding positions include Y89 and 93-96; that span reads GLDR. The Proton acceptor role is filled by D95. Position 115 (D115) interacts with K(+). T118 serves as a coordination point for ATP. T173 provides a ligand contact to substrate.

This sequence belongs to the type III pantothenate kinase family. In terms of assembly, homodimer. Requires NH4(+) as cofactor. K(+) serves as cofactor.

It localises to the cytoplasm. The catalysed reaction is (R)-pantothenate + ATP = (R)-4'-phosphopantothenate + ADP + H(+). It functions in the pathway cofactor biosynthesis; coenzyme A biosynthesis; CoA from (R)-pantothenate: step 1/5. Its function is as follows. Catalyzes the phosphorylation of pantothenate (Pan), the first step in CoA biosynthesis. The protein is Type III pantothenate kinase of Synechococcus sp. (strain JA-2-3B'a(2-13)) (Cyanobacteria bacterium Yellowstone B-Prime).